We begin with the raw amino-acid sequence, 347 residues long: MRYRIFLLFFFALLPTSLVWAAPAQRAFSDWQVTCNNQNFCVARNTGDHNGLVMTLSRSAGAHTDAVLRIERGGLKSPEASEGEIAPRLLLDGEPLALSGDKWRISPWLLVTDDTATITAFLQMIQEGKAITLRDGDQTISLSGLKAALLFIDAQQKRVGSETAWIKKGDEPPLSVPPAPALKEVAVVNPTPTPLSLEERNDLLDYGNWRMNGLRCSLDPLRREVNVTALTDDKALMMISCEAGAYNTIDLAWIVSRKKPLASRPVRLRLPFNNGQETNELELMNATFDEKSRELVTLAKGRGLSDCGIQARWRFDGQRFRLVRYAAEPTCDNWHGPDAWPTLWITR.

The signal sequence occupies residues 1–21; that stretch reads MRYRIFLLFFFALLPTSLVWA.

This is an uncharacterized protein from Escherichia coli (strain K12).